The following is an 893-amino-acid chain: UPF0182 protein CLM_0018 (893 aa).

Transmembrane regions (helical) follow at residues 9–29 (IPLF…NFII), 49–69 (AIII…WMYY), 94–114 (LFFI…SSSY), 154–174 (VIIS…FILE), 202–222 (LAIV…IKIW), 246–266 (FYKI…LSIV), and 273–293 (VSVC…ASFL).

The protein belongs to the UPF0182 family.

Its subcellular location is the cell membrane. The chain is UPF0182 protein CLM_0018 from Clostridium botulinum (strain Kyoto / Type A2).